The chain runs to 643 residues: MYATQPYLELRERLSQIWINRYTLLLMLCMVKILLFTSSLRFSLNNSKVHVLEECSNIEHYYNILRNGTPHYMGKMGNYLVAHALEATVESLLALLTSLATVVEVVAHFMIELWLGTYACLLFSAAHGAVEVATNVTEKVIGVANKTLIAAANELDNGLDGLSKVLNKIIETGTKVSHLFKDDDEEHASPEGQFKKINLTIASLRTVKIPESVNDKLRSLAEKTPDFEDVKNKTKGLVSIPFQTLKNEINGINATSMLKNRKLMSVPPIDMGDAADGVCSANRDGIESVYRNLNSALIYSLVATAVSLAIVALLCLIPAAWHEYRQWERLSALRDHERTVDCKDPFADTHSSASASTASSTRCDVIQNYQGVFHRAPTLIGEWVARHTAHTQEGALRIQWLLAYVLSPRALVPLALGLAGVLVCGCQFLIIHALRIQLASTSTRDSLQRLETDTAGLVAHDLSRWADSTNAYINGTEASVNAGLLGWVTTATTALNTTVAALLADIDSTVDRAFADTPLHRPMVTVVSCVIGNKLRAIEAGLTWTHDHVRIALPRIHTARLRDAVAEPDLPTHPAYTAVLQSLSDRLRHSVDRVLHQCCAAVRIELYVSLALLGLWILQTPLGLAMLLFKSHCRRRNLRRRVP.

Residues 1–16 (MYATQPYLELRERLSQ) lie on the Extracellular side of the membrane. Residues 17–37 (IWINRYTLLLMLCMVKILLFT) traverse the membrane as a helical segment. The Cytoplasmic segment spans residues 38–104 (SSLRFSLNNS…LLTSLATVVE (67 aa)). The chain crosses the membrane as a helical span at residues 105 to 125 (VVAHFMIELWLGTYACLLFSA). Residues 126-296 (AHGAVEVATN…ESVYRNLNSA (171 aa)) are Extracellular-facing. N-linked (GlcNAc...) asparagine glycans are attached at residues asparagine 135, asparagine 145, asparagine 198, asparagine 232, and asparagine 253. A helical membrane pass occupies residues 297-317 (LIYSLVATAVSLAIVALLCLI). Residues 318–410 (PAAWHEYRQW…LLAYVLSPRA (93 aa)) are Cytoplasmic-facing. Residues 411–431 (LVPLALGLAGVLVCGCQFLII) traverse the membrane as a helical segment. Over 432 to 608 (HALRIQLAST…CAAVRIELYV (177 aa)) the chain is Extracellular. Asparagine 474 and asparagine 496 each carry an N-linked (GlcNAc...) asparagine glycan. A helical membrane pass occupies residues 609–629 (SLALLGLWILQTPLGLAMLLF). The Cytoplasmic segment spans residues 630–643 (KSHCRRRNLRRRVP).

The protein belongs to the PRM1 family.

The protein localises to the cell membrane. In terms of biological role, involved in cell fusion during mating by stabilizing the plasma membrane fusion event. This Eremothecium gossypii (strain ATCC 10895 / CBS 109.51 / FGSC 9923 / NRRL Y-1056) (Yeast) protein is Plasma membrane fusion protein PRM1 (PRM1).